The chain runs to 451 residues: E3 ubiquitin-protein ligase trul-1 (451 aa).

The RING-type; atypical zinc finger occupies 13 to 54; that stretch reads CSICFEDLKQNDKISAIVCGHIYHHGCISQWIATKRQCPSCR. Coiled coils occupy residues 96-130 and 209-243; these read LKVE…EKDK and NKDL…DAAI. 2 disordered regions span residues 270 to 297 and 389 to 442; these read RDVL…MIDP and KIPN…SSTS. Residues 427-442 are compositionally biased toward low complexity; that stretch reads STRISSFFSRTTSSTS.

This sequence belongs to the TRAIP family.

It is found in the nucleus. The protein localises to the chromosome. The enzyme catalyses S-ubiquitinyl-[E2 ubiquitin-conjugating enzyme]-L-cysteine + [acceptor protein]-L-lysine = [E2 ubiquitin-conjugating enzyme]-L-cysteine + N(6)-ubiquitinyl-[acceptor protein]-L-lysine.. It functions in the pathway protein modification; protein ubiquitination. E3 ubiquitin ligase that acts as a key regulator of DNA repair in response to replication stress. Acts by mediating ubiquitination of the CMG helicase complex, promoting the unloading of the CMG helicase complex by the p97 ATPase (cdc-48.1 or cdc-48.2). The protein is E3 ubiquitin-protein ligase trul-1 of Caenorhabditis elegans.